The following is a 317-amino-acid chain: Glutaminase (317 aa).

Residues Ser-67, Asn-118, Glu-162, Asn-169, Tyr-193, Tyr-245, and Val-263 each coordinate substrate.

This sequence belongs to the glutaminase family. As to quaternary structure, homotetramer.

The catalysed reaction is L-glutamine + H2O = L-glutamate + NH4(+). This is Glutaminase from Brucella canis (strain ATCC 23365 / NCTC 10854 / RM-666).